Here is a 98-residue protein sequence, read N- to C-terminus: Sarcosine oxidase subunit delta (98 aa).

Zn(2+) is bound by residues C6, C9, H59, and C63.

Belongs to the SoxD family. As to quaternary structure, heterotetramer composed of subunits alpha (SoxA), beta (SoxB), gamma (SoxG) and delta (SoxD).

Its subcellular location is the cytoplasm. The enzyme catalyses sarcosine + (6S)-5,6,7,8-tetrahydrofolate + O2 = (6R)-5,10-methylene-5,6,7,8-tetrahydrofolate + glycine + H2O2. It catalyses the reaction sarcosine + O2 + H2O = formaldehyde + glycine + H2O2. Its function is as follows. In the presence of tetrahydrofolate, catalyzes the oxidative demethylation of sarcosine to yield glycine, 5,10-methylenetetrahydrofolate and hydrogen peroxide. In the absence of tetrahydrofolate, catalyzes the oxidative demethylation of sarcosine to yield glycine, formaldehyde and hydrogen peroxide. In Corynebacterium sp. (strain P-1), this protein is Sarcosine oxidase subunit delta.